The sequence spans 145 residues: UPF0735 ACT domain-containing protein CKL_0858 (145 aa).

An ACT domain is found at 69 to 144; it reads TLGLTLAHKA…SVIKVNLAAV (76 aa).

The protein belongs to the UPF0735 family.

The chain is UPF0735 ACT domain-containing protein CKL_0858 from Clostridium kluyveri (strain ATCC 8527 / DSM 555 / NBRC 12016 / NCIMB 10680 / K1).